Consider the following 364-residue polypeptide: Caffeic acid 3-O-methyltransferase 2 (364 aa).

Position 129 to 135 (129 to 135) interacts with substrate; the sequence is MNQDKVL. The substrate binding stretch occupies residues 161–179; that stretch reads AFEYHGTDPRFNKVFNKGM. Positions 207, 230, 250, 251, and 264 each coordinate S-adenosyl-L-methionine. The Proton acceptor role is filled by H268.

It belongs to the class I-like SAM-binding methyltransferase superfamily. Cation-independent O-methyltransferase family. COMT subfamily. As to quaternary structure, homodimer.

It carries out the reaction (E)-caffeate + S-adenosyl-L-methionine = (E)-ferulate + S-adenosyl-L-homocysteine + H(+). The protein operates within aromatic compound metabolism; phenylpropanoid biosynthesis. Catalyzes the conversion of caffeic acid to ferulic acid and of 5-hydroxyferulic acid to sinapic acid. The resulting products may subsequently be converted to the corresponding alcohols that are incorporated into lignins. This Populus tremuloides (Quaking aspen) protein is Caffeic acid 3-O-methyltransferase 2 (OMT2).